Reading from the N-terminus, the 294-residue chain is Protoheme IX farnesyltransferase (294 aa).

9 helical membrane-spanning segments follow: residues Ile13–Ile33, Tyr35–Phe55, Ile84–Ala104, Leu107–Met127, Val132–Ala152, Leu162–Phe182, Ile208–Ala228, Gly229–Ser249, and Phe264–Val284.

The protein belongs to the UbiA prenyltransferase family. Protoheme IX farnesyltransferase subfamily.

Its subcellular location is the cell inner membrane. It carries out the reaction heme b + (2E,6E)-farnesyl diphosphate + H2O = Fe(II)-heme o + diphosphate. The protein operates within porphyrin-containing compound metabolism; heme O biosynthesis; heme O from protoheme: step 1/1. In terms of biological role, converts heme B (protoheme IX) to heme O by substitution of the vinyl group on carbon 2 of heme B porphyrin ring with a hydroxyethyl farnesyl side group. The chain is Protoheme IX farnesyltransferase from Photorhabdus laumondii subsp. laumondii (strain DSM 15139 / CIP 105565 / TT01) (Photorhabdus luminescens subsp. laumondii).